Reading from the N-terminus, the 1220-residue chain is Formin-F (1220 aa).

Positions 1–10 (MNRIFGRKKK) are enriched in basic residues. A disordered region spans residues 1–62 (MNRIFGRKKK…TNSKSADKFD (62 aa)). Residues 6–373 (GRKKKDKDSD…QISVNKPMIG (368 aa)) enclose the GBD/FH3 domain. A compositionally biased stretch (basic and acidic residues) spans 11-20 (DKDSDEKGST). Positions 41–56 (AYSSLQPDGNNSTNSK) are enriched in polar residues. The stretch at 392–428 (VALQSEFQKNIEELAKVKDQLKKANFDLNIANQELSS) forms a coiled coil. 3 disordered regions span residues 461–659 (IDSN…KFTV), 711–732 (SQKK…GTVS), and 1049–1192 (DEAK…KKDI). Low complexity-rich tracts occupy residues 501-518 (SKPP…SSSQ) and 525-554 (SNLS…PQQQ). An FH1 domain is found at 532-655 (SDSLSNDFKS…NSNKPPANAP (124 aa)). Polar residues predominate over residues 555–564 (NIESTLTPEP). The segment covering 575 to 638 (TTPPPAPPAP…GKGGPPPPPG (64 aa)) has biased composition (pro residues). Positions 656–1054 (KFTVSKPTTK…AIKRDEAKAK (399 aa)) constitute an FH2 domain. Residues 711-722 (SQKKLEASDKKS) are compositionally biased toward basic and acidic residues. Residues 1032–1062 (YKDFQRDKEAAERAIKRDEAKAKKAQQLKRM) adopt a coiled-coil conformation. The segment covering 1066 to 1083 (IASSTNNKNPLASSSTSV) has biased composition (polar residues). A DAD domain is found at 1083–1158 (VGDGGMVEDI…TPSKSGSRRE (76 aa)). Residues 1117-1142 (DSSSITTISEQSENSNTSSITITTPS) show a composition bias toward low complexity. Residues 1161-1192 (TSKSSDKDKEKEKEKEKQCESTESEDINKKDI) show a composition bias toward basic and acidic residues.

The protein belongs to the formin homology family. Diaphanous subfamily. As to quaternary structure, interacts (via GBD/FH3 domain) with activated Rho-GTPases.

Functionally, formins play an important role in the nucleation of actin and the formation of linear actin filaments. This is Formin-F (forF) from Dictyostelium discoideum (Social amoeba).